A 748-amino-acid chain; its full sequence is Choline O-acetyltransferase (748 aa).

A compositionally biased stretch (basic residues) spans 1 to 10 (MGLRTAKKRG). Residues 1 to 89 (MGLRTAKKRG…EWCGAASAEA (89 aa)) are disordered. The span at 17–32 (WKREEGGGTRGRREVR) shows a compositional bias: basic and acidic residues. Residues 40-53 (GGRGDPGDVGGPAG) are compositionally biased toward gly residues. 2 stretches are compositionally biased toward low complexity: residues 54–65 (NPGCSPHPRAAT) and 73–89 (HTPA…SAEA). S125 is subject to Phosphoserine. H442 serves as the catalytic Proton acceptor. S473 carries the phosphoserine modification. Residues 520–532 (GKTF…CSPD), S558, and Q659 contribute to the CoA site. Residues 727–748 (PTESKPLATKEKATRPSQGHQP) are disordered.

The protein belongs to the carnitine/choline acetyltransferase family.

It carries out the reaction choline + acetyl-CoA = acetylcholine + CoA. Functionally, catalyzes the reversible synthesis of acetylcholine (ACh) from acetyl CoA and choline at cholinergic synapses. This chain is Choline O-acetyltransferase (CHAT), found in Homo sapiens (Human).